The following is an 82-amino-acid chain: Small ribosomal subunit protein bS16 (82 aa).

It belongs to the bacterial ribosomal protein bS16 family.

In Pectobacterium carotovorum subsp. carotovorum (strain PC1), this protein is Small ribosomal subunit protein bS16.